Here is an 874-residue protein sequence, read N- to C-terminus: Alanine--tRNA ligase (874 aa).

Zn(2+) contacts are provided by histidine 559, histidine 563, cysteine 661, and histidine 665.

Belongs to the class-II aminoacyl-tRNA synthetase family. Requires Zn(2+) as cofactor.

The protein localises to the cytoplasm. The enzyme catalyses tRNA(Ala) + L-alanine + ATP = L-alanyl-tRNA(Ala) + AMP + diphosphate. In terms of biological role, catalyzes the attachment of alanine to tRNA(Ala) in a two-step reaction: alanine is first activated by ATP to form Ala-AMP and then transferred to the acceptor end of tRNA(Ala). Also edits incorrectly charged Ser-tRNA(Ala) and Gly-tRNA(Ala) via its editing domain. The sequence is that of Alanine--tRNA ligase from Microcystis aeruginosa (strain NIES-843 / IAM M-2473).